We begin with the raw amino-acid sequence, 229 residues long: Ribonuclease 3 (229 aa).

In terms of domain architecture, RNase III spans leucine 5–glycine 136. Glutamate 49 provides a ligand contact to Mg(2+). Residue aspartate 53 is part of the active site. 2 residues coordinate Mg(2+): aspartate 122 and glutamate 125. Glutamate 125 is a catalytic residue. The 69-residue stretch at aspartate 161–arginine 229 folds into the DRBM domain.

Belongs to the ribonuclease III family. As to quaternary structure, homodimer. It depends on Mg(2+) as a cofactor.

The protein localises to the cytoplasm. It catalyses the reaction Endonucleolytic cleavage to 5'-phosphomonoester.. In terms of biological role, digests double-stranded RNA. Involved in the processing of primary rRNA transcript to yield the immediate precursors to the large and small rRNAs (23S and 16S). Processes some mRNAs, and tRNAs when they are encoded in the rRNA operon. Processes pre-crRNA and tracrRNA of type II CRISPR loci if present in the organism. The chain is Ribonuclease 3 from Chloroflexus aggregans (strain MD-66 / DSM 9485).